The chain runs to 75 residues: Acyl carrier protein (75 aa).

Residues 1–75 (MALFDDVKEV…GDAIKFIENV (75 aa)) form the Carrier domain. Ser36 is modified (O-(pantetheine 4'-phosphoryl)serine).

Belongs to the acyl carrier protein (ACP) family. 4'-phosphopantetheine is transferred from CoA to a specific serine of apo-ACP by AcpS. This modification is essential for activity because fatty acids are bound in thioester linkage to the sulfhydryl of the prosthetic group.

The protein resides in the cytoplasm. Its pathway is lipid metabolism; fatty acid biosynthesis. Its function is as follows. Carrier of the growing fatty acid chain in fatty acid biosynthesis. The chain is Acyl carrier protein from Sulfurovum sp. (strain NBC37-1).